The sequence spans 148 residues: Multiprotein-bridging factor 1c (148 aa).

An HTH cro/C1-type domain is found at 91 to 145 (IQKARLEKKMSQADLAKQINERTQVVQEYENGKAVPNQAVLAKMEKVLGVKLRGK). The segment at residues 102–121 (QADLAKQINERTQVVQEYEN) is a DNA-binding region (H-T-H motif).

Belongs to the MBF1 family. As to quaternary structure, binds to TPS5. As to expression, expressed in leaves, roots, stems, flowers, siliques and shoots. Not detected in seeds.

The protein resides in the nucleus. The protein localises to the nucleolus. Its subcellular location is the cytoplasm. Functionally, transcriptional coactivator that stimulates transcriptional activity by bridging regulatory proteins and TBP, thereby recruiting TBP to promoters occupied by DNA-binding regulators. Involved in the tolerance to heat and osmotic stress by partially activating the ethylene-response signal transduction pathway. This chain is Multiprotein-bridging factor 1c (MBF1C), found in Arabidopsis thaliana (Mouse-ear cress).